Consider the following 126-residue polypeptide: Protein ApaG (126 aa).

The ApaG domain occupies 2–126 (SDPRYQIDVS…FRLAVPGALH (125 aa)).

In Ectopseudomonas mendocina (strain ymp) (Pseudomonas mendocina), this protein is Protein ApaG.